The sequence spans 996 residues: NACHT, LRR and PYD domains-containing protein 9 (996 aa).

The 94-residue stretch at 1 to 94 (MAESFFSDFG…WRKARNEIRQ (94 aa)) folds into the Pyrin domain. Positions 150-469 (PTVVLHGPEG…FYMFTRPKDP (320 aa)) constitute an NACHT domain. 156–163 (GPEGIGKT) lines the ATP pocket. LRR repeat units follow at residues 748-769 (KLNL…VLCE), 777-798 (ALEA…HLSQ), 805-825 (SLTF…TTLC), 834-855 (NLQE…DIAT), 862-883 (KLKT…QLCK), and 891-914 (KLEN…ASAL).

The protein belongs to the NLRP family. Sensor component of NLRP9 inflammasomes. Inflammasomes are supramolecular complexes that assemble in the cytosol in response to pathogens, such as rotavirus, and play critical roles in innate immunity and inflammation. The core of NLRP9 inflammasomes consists of a signal sensor component (NLRP9), an adapter (ASC/PYCARD), which recruits an effector pro-inflammatory caspase (CASP1). Within the complex, NLRP9 and PYCARD interact via their respective DAPIN/pyrin domains. This interaction initiates speck formation (nucleation) which greatly enhances further addition of soluble PYCARD molecules to the speck in a prion-like polymerization process. Clustered PYCARD nucleates the formation of CASP1 filaments through the interaction of their respective CARD domains, acting as a platform for CASP1 polymerization. CASP1 filament formation increases local enzyme concentration, resulting in trans-autocleavage and activation. Active CASP1 then processes IL1B and IL18 precursors, leading to the release of mature cytokines in the extracellular milieu and inflammatory response. Interacts with DHX9 upon rotavirus infection; this interaction may trigger inflammasome activation and inflammatory response. In terms of tissue distribution, detected exclusively in testis and ovary, and at high level in the oocyte from antral follicles.

It localises to the cytoplasm. It is found in the inflammasome. As the sensor component of the NLRP9 inflammasome, plays a crucial role in innate immunity and inflammation. In response to pathogens, including rotavirus, initiates the formation of the inflammasome polymeric complex, made of NLRP9, PYCARD and CASP1. Recruitment of proCASP1 to the inflammasome promotes its activation and CASP1-catalyzed IL1B and IL18 maturation and release in the extracellular milieu. The active cytokines stimulate inflammatory responses. Inflammasomes can also induce pyroptosis, an inflammatory form of programmed cell death. NLRP9 inflammasome activation may be initiated by DHX9 interaction with viral double-stranded RNA (dsRNA), preferentially to short dsRNA segments. The sequence is that of NACHT, LRR and PYD domains-containing protein 9 (NLRP9) from Bos taurus (Bovine).